The primary structure comprises 337 residues: 5-dehydro-2-deoxygluconokinase (337 aa).

It belongs to the carbohydrate kinase PfkB family.

It catalyses the reaction 5-dehydro-2-deoxy-D-gluconate + ATP = 6-phospho-5-dehydro-2-deoxy-D-gluconate + ADP + H(+). Its pathway is polyol metabolism; myo-inositol degradation into acetyl-CoA; acetyl-CoA from myo-inositol: step 5/7. Its function is as follows. Catalyzes the phosphorylation of 5-dehydro-2-deoxy-D-gluconate (2-deoxy-5-keto-D-gluconate or DKG) to 6-phospho-5-dehydro-2-deoxy-D-gluconate (DKGP). The chain is 5-dehydro-2-deoxygluconokinase from Geobacillus thermodenitrificans (strain NG80-2).